Reading from the N-terminus, the 141-residue chain is Hemoglobin subunit alpha (141 aa).

The region spanning 1 to 141 is the Globin domain; that stretch reads VLSPADKKNV…VSTVLTSKYR (141 aa). The residue at position 3 (S3) is a Phosphoserine. An N6-succinyllysine mark is found at K7 and K11. Residue K16 is modified to N6-acetyllysine; alternate. K16 is modified (N6-succinyllysine; alternate). Y24 carries the phosphotyrosine modification. A Phosphoserine modification is found at S35. At K40 the chain carries N6-succinyllysine. A Phosphoserine modification is found at S49. Position 58 (H58) interacts with O2. H87 is a binding site for heme b. A Phosphoserine modification is found at S102. T108 is subject to Phosphothreonine. Residues S124 and S131 each carry the phosphoserine modification. A phosphothreonine mark is found at T134 and T137. A Phosphoserine modification is found at S138.

The protein belongs to the globin family. As to quaternary structure, heterotetramer of two alpha chains and two beta chains. In terms of tissue distribution, red blood cells.

In terms of biological role, involved in oxygen transport from the lung to the various peripheral tissues. Hemopressin acts as an antagonist peptide of the cannabinoid receptor CNR1. Hemopressin-binding efficiently blocks cannabinoid receptor CNR1 and subsequent signaling. This is Hemoglobin subunit alpha (HBA) from Spermophilus citellus (European ground squirrel).